An 827-amino-acid polypeptide reads, in one-letter code: Villin-1 (827 aa).

The interval 1–126 (MTKLNAQVKG…IRKGGVASGM (126 aa)) is necessary for homodimerization. A core region spans residues 1–734 (MTKLNAQVKG…YDDLKAELGN (734 aa)). The Gelsolin-like 1 repeat unit spans residues 27 to 76 (MQMVPVPSSTFGSFFDGDCYVVLAIHKTSSTLSYDIHYWIGQDSSQDEQG). LPA/PIP2-binding site regions lie at residues 112-119 (KQGLVIRK) and 138-146 (RLLHVKGKR). Gelsolin-like repeat units follow at residues 148–188 (VLAG…MERL) and 265–309 (LVVR…QERS). Phosphoserine is present on Ser-366. Gelsolin-like repeat units follow at residues 407–457 (DLEL…DEIA), 528–568 (TKAF…DERE), and 631–672 (FLAT…EEKK). Residues Ser-735 and Ser-776 each carry the phosphoserine modification. The tract at residues 735–827 (SGDWSQIADE…QNIKKEKGLF (93 aa)) is headpiece. Residues 761 to 827 (SGPLPTFPLE…QNIKKEKGLF (67 aa)) form the HP domain. The interval 816-824 (KQQNIKKEK) is LPA/PIP2-binding site 3.

It belongs to the villin/gelsolin family. In terms of assembly, monomer. Homodimer; homodimerization is necessary for actin-bundling. Associates with F-actin; phosphorylation at tyrosine residues decreases the association with F-actin. Interacts (phosphorylated at C-terminus tyrosine phosphorylation sites) with PLCG1 (via the SH2 domains). Interacts (phosphorylated form) with PLCG1; the interaction is enhanced by hepatocyte growth factor (HGF). Phosphorylated on tyrosine residues by SRC. The unphosphorylated form increases the initial rate of actin-nucleating activity, whereas the tyrosine phosphorylated form inhibits actin-nucleating activity, enhances actin-bundling activity and enhances actin-severing activity by reducing high Ca(2+) requirements. The tyrosine phosphorylated form does not regulate actin-capping activity. Tyrosine phosphorylation is essential for cell migration: tyrosine phosphorylation sites in the N-terminus half regulate actin reorganization and cell morphology, whereas tyrosine phosphorylation sites in the C-terminus half regulate cell migration via interaction with PLCG1. Tyrosine phosphorylation is induced by epidermal growth factor (EGF) and stimulates cell migration. Expressed in small intestin, colon, kidney and enterocytes (at protein level).

It localises to the cytoplasm. It is found in the cytoskeleton. The protein localises to the cell projection. The protein resides in the microvillus. Its subcellular location is the lamellipodium. It localises to the ruffle. It is found in the filopodium tip. The protein localises to the filopodium. Its function is as follows. Epithelial cell-specific Ca(2+)-regulated actin-modifying protein that modulates the reorganization of microvillar actin filaments. Plays a role in the actin nucleation, actin filament bundle assembly, actin filament capping and severing. Binds phosphatidylinositol 4,5-bisphosphate (PIP2) and lysophosphatidic acid (LPA); binds LPA with higher affinity than PIP2. Binding to LPA increases its phosphorylation by SRC and inhibits all actin-modifying activities. Binding to PIP2 inhibits actin-capping and -severing activities but enhances actin-bundling activity. Regulates the intestinal epithelial cell morphology, cell invasion, cell migration and apoptosis. Protects against apoptosis induced by dextran sodium sulfate (DSS) in the gastrointestinal epithelium. Appears to regulate cell death by maintaining mitochondrial integrity. Enhances hepatocyte growth factor (HGF)-induced epithelial cell motility, chemotaxis and wound repair. Upon S.flexneri cell infection, its actin-severing activity enhances actin-based motility of the bacteria and plays a role during the dissemination. In Mus musculus (Mouse), this protein is Villin-1 (Vil1).